The primary structure comprises 91 residues: Defensin-like protein 220 (91 aa).

The N-terminal stretch at M1–S19 is a signal peptide. 3 cysteine pairs are disulfide-bonded: C61-C78, C64-C83, and C68-C85.

Belongs to the DEFL family.

Its subcellular location is the secreted. This Arabidopsis thaliana (Mouse-ear cress) protein is Defensin-like protein 220.